A 406-amino-acid polypeptide reads, in one-letter code: 5-cytosine rRNA methyltransferase NSUN4 (406 aa).

Residues Gly207, Gly208, Lys209, Asp226, Arg231, Asp259, Gly260, and Asp277 each contribute to the S-adenosyl-L-methionine site. Catalysis depends on Cys332, which acts as the Nucleophile.

It belongs to the class I-like SAM-binding methyltransferase superfamily. RsmB/NOP family.

It is found in the mitochondrion. It catalyses the reaction a cytidine in rRNA + S-adenosyl-L-methionine = a 5-methylcytidine in rRNA + S-adenosyl-L-homocysteine + H(+). The enzyme catalyses a cytidine in mRNA + S-adenosyl-L-methionine = a 5-methylcytidine in mRNA + S-adenosyl-L-homocysteine + H(+). Its function is as follows. Involved in mitochondrial ribosome large subunit biogenesis. Mitochondrial RNA cytosine C(5)-methyltransferase that methylates cytosine to 5-methylcytosine (m5C) in various RNAs, such as rRNAs, mRNAs and some long non-coding RNAs (lncRNAs). Involved in mitochondrial ribosome small subunit (SSU) maturation by catalyzing methylation of mitochondrial 12S rRNA. The polypeptide is 5-cytosine rRNA methyltransferase NSUN4 (nsun4) (Xenopus tropicalis (Western clawed frog)).